Consider the following 697-residue polypeptide: Protein arginine N-methyltransferase 7 (697 aa).

2 SAM-dependent MTase PRMT-type domains span residues 14–357 (QNTW…YSLW) and 366–697 (EQPA…EETK).

The protein belongs to the class I-like SAM-binding methyltransferase superfamily. Protein arginine N-methyltransferase family. PRMT7 subfamily.

Functionally, essential arginine methyltransferase that can both catalyze the formation of omega-N monomethylarginine (MMA) and symmetrical dimethylarginine (sDMA). Specifically mediates the symmetrical dimethylation of arginine residues in the small nuclear ribonucleoproteins SmD1 and SmD3. The protein is Protein arginine N-methyltransferase 7 (Art7) of Drosophila virilis (Fruit fly).